Here is an 85-residue protein sequence, read N- to C-terminus: MSSGGLLLLLGLLTLCAELTPVSSRQRHRDCDKPPDKGNCGSVRRAFYYDTRLKTCKAFPYRGCNGNGNHFKTETLCRCECLVYP.

A signal peptide spans methionine 1–serine 24. A BPTI/Kunitz inhibitor domain is found at cysteine 31–cysteine 81. Disulfide bonds link cysteine 31/cysteine 81, cysteine 40/cysteine 64, and cysteine 56/cysteine 77.

Belongs to the venom Kunitz-type family. Heterodimer; disulfide-linked. The A chain has phospholipase A2 activity and the B chain shows homology with the basic protease inhibitors. In terms of tissue distribution, expressed by the venom gland.

Its subcellular location is the secreted. Its function is as follows. Beta-bungarotoxin is a presynaptic neurotoxin of the venom. The B chain is homologous to venom basic protease inhibitors but has no protease inhibitor activity and is non-toxic. This Bungarus candidus (Malayan krait) protein is Kunitz-type serine protease inhibitor homolog beta-bungarotoxin B1 chain.